Reading from the N-terminus, the 683-residue chain is Long-chain fatty acid transport protein 3 (683 aa).

The chain crosses the membrane as a helical span at residues 3–23 (ALLLLPLLLLLPLLLLKLHLW). Gly residues predominate over residues 119–128 (GGDSGEGSAG). The interval 119–145 (GGDSGEGSAGEGERAAPGAGDAAAGSG) is disordered. Residues 133 to 145 (AAPGAGDAAAGSG) are compositionally biased toward low complexity. Residues 288–292 (TSGTT), His331, Thr428, Asp528, Arg543, and Lys635 each bind ATP.

It belongs to the ATP-dependent AMP-binding enzyme family. In terms of tissue distribution, expressed in bronchial and bronchiolar epithelial cells (at protein level).

The protein resides in the mitochondrion membrane. It carries out the reaction a fatty acid(in) = a fatty acid(out). It catalyses the reaction a long-chain fatty acid + ATP + CoA = a long-chain fatty acyl-CoA + AMP + diphosphate. The catalysed reaction is hexadecanoate + ATP + CoA = hexadecanoyl-CoA + AMP + diphosphate. The enzyme catalyses (9Z)-octadecenoate + ATP + CoA = (9Z)-octadecenoyl-CoA + AMP + diphosphate. It carries out the reaction (9Z,12Z)-octadecadienoate + ATP + CoA = (9Z,12Z)-octadecadienoyl-CoA + AMP + diphosphate. It catalyses the reaction (5Z,8Z,11Z,14Z)-eicosatetraenoate + ATP + CoA = (5Z,8Z,11Z,14Z)-eicosatetraenoyl-CoA + AMP + diphosphate. The catalysed reaction is a very long-chain fatty acid + ATP + CoA = a very long-chain fatty acyl-CoA + AMP + diphosphate. The enzyme catalyses tetracosanoate + ATP + CoA = tetracosanoyl-CoA + AMP + diphosphate. Mainly functions as an acyl-CoA ligase catalyzing the ATP-dependent formation of fatty acyl-CoA using LCFA and very-long-chain fatty acids (VLCFA) as substrates. Can mediate the levels of long-chain fatty acids (LCFA) in the cell by facilitating their transport across membranes. This Homo sapiens (Human) protein is Long-chain fatty acid transport protein 3.